We begin with the raw amino-acid sequence, 277 residues long: MEMO1 family protein MTH_45 (277 aa).

It belongs to the MEMO1 family.

The protein is MEMO1 family protein MTH_45 of Methanothermobacter thermautotrophicus (strain ATCC 29096 / DSM 1053 / JCM 10044 / NBRC 100330 / Delta H) (Methanobacterium thermoautotrophicum).